Consider the following 274-residue polypeptide: Diaminopimelate epimerase (274 aa).

Residues Asn-11, Gln-44, and Asn-64 each contribute to the substrate site. The active-site Proton donor is the Cys-73. Substrate contacts are provided by residues 74–75 (GN), Asn-157, Asn-190, and 208–209 (ER). Cys-217 serves as the catalytic Proton acceptor. Position 218-219 (218-219 (GS)) interacts with substrate.

Belongs to the diaminopimelate epimerase family. As to quaternary structure, homodimer.

It is found in the cytoplasm. The catalysed reaction is (2S,6S)-2,6-diaminopimelate = meso-2,6-diaminopimelate. It participates in amino-acid biosynthesis; L-lysine biosynthesis via DAP pathway; DL-2,6-diaminopimelate from LL-2,6-diaminopimelate: step 1/1. Catalyzes the stereoinversion of LL-2,6-diaminopimelate (L,L-DAP) to meso-diaminopimelate (meso-DAP), a precursor of L-lysine and an essential component of the bacterial peptidoglycan. In Photorhabdus laumondii subsp. laumondii (strain DSM 15139 / CIP 105565 / TT01) (Photorhabdus luminescens subsp. laumondii), this protein is Diaminopimelate epimerase.